The sequence spans 208 residues: FAS-associated death domain protein (208 aa).

A DED domain is found at 3–81; sequence PFLVLLHSVS…RHDLLRRVDD (79 aa). The 85-residue stretch at 97-181 folds into the Death domain; the sequence is LCAAFNVICD…LVADLVQEVQ (85 aa). R117 is a glycosylation site ((Microbial infection) N-beta-linked (GlcNAc) arginine). The tract at residues 187–208 is disordered; it reads QNRSGAMSPMSWNSDASTSEAS. At S194 the chain carries Phosphoserine.

Can self-associate. Component of the AIM2 PANoptosome complex, a multiprotein complex that drives inflammatory cell death (PANoptosis). Component of the death-induced signaling complex (DISC) composed of cell surface receptor FAS/CD95 or TNFRSF1A, adapter protein FADD and the CASP8 protease; recruitment of CASP8 to the complex is required for processing of CASP8 into the p18 and p10 subunits. Interacts (via death domain) with FAS (via death domain). Interacts directly (via DED domain) with NOL3 (via CARD domain); inhibits death-inducing signaling complex (DISC) assembly by inhibiting the increase in FAS-FADD binding induced by FAS activation. Interacts with CFLAR, PEA15 and MBD4. When phosphorylated, part of a complex containing HIPK3 and FAS. May interact with MAVS/IPS1. Interacts with MOCV v-CFLAR protein and PIDD1. Interacts with RIPK1 and TRADD. Interacts with stimulated TNFRSF10B. Interacts with DDX24. As to quaternary structure, (Microbial infection) Interacts with human papillomavirus 16/HPV16 protein E6. In terms of assembly, (Microbial infection) Interacts with molluscum contagiosum virus proteins MC159L/v-CFLAR and MC160L. (Microbial infection) Glycosylated at Arg-117 by enteropathogenic E.coli protein NleB1, C.rodentium protein NleB and S.typhimurium protein Ssek1: arginine GlcNAcylation prevents recruitment of caspase-8 or caspase-10 to the activated Fas (CD95) or TNFR-1 receptors. As to expression, expressed in a wide variety of tissues, except for peripheral blood mononuclear leukocytes.

Its subcellular location is the cytoplasm. Functionally, apoptotic adapter molecule that recruits caspases CASP8 or CASP10 to the activated FAS/CD95 or TNFRSF1A/TNFR-1 receptors. The resulting aggregate called the death-inducing signaling complex (DISC) performs CASP8 proteolytic activation. Active CASP8 initiates the subsequent cascade of caspases mediating apoptosis. Involved in interferon-mediated antiviral immune response, playing a role in the positive regulation of interferon signaling. The sequence is that of FAS-associated death domain protein from Homo sapiens (Human).